A 488-amino-acid polypeptide reads, in one-letter code: Prostaglandin E2 receptor EP4 subtype (488 aa).

Over 1 to 19 (MSTPVANASASSMPELLNN) the chain is Extracellular. A glycan (N-linked (GlcNAc...) asparagine) is linked at asparagine 7. The chain crosses the membrane as a helical span at residues 20–43 (PVTIPAVMFIFGVVGNLVAIVVLC). Residues 44 to 55 (KSRKEQKETTFY) are Cytoplasmic-facing. A helical membrane pass occupies residues 56–79 (TLVCGLAVTDLLGTLLVSPVTIAT). Topologically, residues 80–96 (YMKGQWPGGQALCDYST) are extracellular. Cysteine 92 and cysteine 170 form a disulfide bridge. The chain crosses the membrane as a helical span at residues 97–115 (FILLFFGLSGLSIICAMSI). The Cytoplasmic segment spans residues 116–135 (ERYLAINHAYFYSHYVDKRL). The helical transmembrane segment at 136–160 (AGLTLFAVYASNVLFCALPNMGLGR) threads the bilayer. Over 161-184 (SRLQFPDTWCFIDWRTNVTAHAAF) the chain is Extracellular. Asparagine 177 carries N-linked (GlcNAc...) asparagine glycosylation. A helical transmembrane segment spans residues 185-211 (SYMYAGFSSFLILATVLCNVLVCGALL). Topologically, residues 212 to 270 (RMHRQFMRRTSLGTEQHHAAAAAAVTSAACRGHPTASPALPRLSDFRRRRSFRRIAGAE) are cytoplasmic. The helical transmembrane segment at 271 to 298 (IQMVILLIATSLVVLICSIPLVVRVFIN) threads the bilayer. Residues 299–315 (QLYQPDLVREISQNPDL) are Extracellular-facing. Residues 316–335 (QAIRIASVNPILDPWIYILL) traverse the membrane as a helical segment. The Cytoplasmic segment spans residues 336–488 (RKTVLSKAIE…ETLNLSEKCI (153 aa)). The segment covering 358-371 (RRDRSGQHCSDSRR) has biased composition (basic and acidic residues). The segment at 358–381 (RRDRSGQHCSDSRRTSSAMSTHSR) is disordered. The span at 372–381 (TSSAMSTHSR) shows a compositional bias: polar residues. Residues serine 377, serine 380, serine 382, and serine 385 each carry the phosphoserine modification. The interval 456–475 (EVGGGGRAGPTPKGSSLQVT) is disordered.

Belongs to the G-protein coupled receptor 1 family. In terms of assembly, interacts with FEM1A. In terms of processing, phosphorylation mediates agonist-mediated desensitization by promoting cytoplasmic retention. As to expression, highly expressed in intestine, duodenal epithelium, uterus, thymus and adrenal cortex. Lower but significant expression in whole adrenal, lung, spleen, stomach, and kidney. In this latter organ, the receptor is localized in the glomeruli and the transitional epithelium of the renal calyx.

The protein resides in the cell membrane. Its function is as follows. Receptor for prostaglandin E2 (PGE2). The activity of this receptor is mediated by G(s) proteins that stimulate adenylate cyclase. Has a relaxing effect on smooth muscle. May play an important role in regulating renal hemodynamics, intestinal epithelial transport, adrenal aldosterone secretion, and uterine function. In Oryctolagus cuniculus (Rabbit), this protein is Prostaglandin E2 receptor EP4 subtype (PTGER4).